The following is a 429-amino-acid chain: GTPase Obg (429 aa).

Positions 1 to 158 constitute an Obg domain; that stretch reads MFYDTAKIYV…RWLLLELKLL (158 aa). Residues 159-329 enclose the OBG-type G domain; it reads ADVGLVGYPN…LIYRLWEIIS (171 aa). Residues 165-172, 190-194, 212-215, 282-285, and 310-312 each bind GTP; these read GYPNAGKS, FTTLT, DIPG, NKMD, and SAL. Ser172 and Thr192 together coordinate Mg(2+). The OCT domain occupies 344–421; sequence IKEQPEEGFV…IGKFEFYFVD (78 aa).

Belongs to the TRAFAC class OBG-HflX-like GTPase superfamily. OBG GTPase family. In terms of assembly, monomer. The cofactor is Mg(2+).

Its subcellular location is the cytoplasm. In terms of biological role, an essential GTPase which binds GTP, GDP and possibly (p)ppGpp with moderate affinity, with high nucleotide exchange rates and a fairly low GTP hydrolysis rate. Plays a role in control of the cell cycle, stress response, ribosome biogenesis and in those bacteria that undergo differentiation, in morphogenesis control. This chain is GTPase Obg, found in Carboxydothermus hydrogenoformans (strain ATCC BAA-161 / DSM 6008 / Z-2901).